Here is a 282-residue protein sequence, read N- to C-terminus: Bifunctional protein FolD (282 aa).

Residues 164–166, isoleucine 189, and isoleucine 230 contribute to the NADP(+) site; that span reads GAS.

This sequence belongs to the tetrahydrofolate dehydrogenase/cyclohydrolase family. Homodimer.

It carries out the reaction (6R)-5,10-methylene-5,6,7,8-tetrahydrofolate + NADP(+) = (6R)-5,10-methenyltetrahydrofolate + NADPH. It catalyses the reaction (6R)-5,10-methenyltetrahydrofolate + H2O = (6R)-10-formyltetrahydrofolate + H(+). It functions in the pathway one-carbon metabolism; tetrahydrofolate interconversion. Functionally, catalyzes the oxidation of 5,10-methylenetetrahydrofolate to 5,10-methenyltetrahydrofolate and then the hydrolysis of 5,10-methenyltetrahydrofolate to 10-formyltetrahydrofolate. In Campylobacter jejuni (strain RM1221), this protein is Bifunctional protein FolD.